We begin with the raw amino-acid sequence, 428 residues long: Adenylosuccinate synthetase, chloroplastic (428 aa).

GTP-binding positions include glycine 17–lysine 23 and glycine 45–threonine 47. The active-site Proton acceptor is aspartate 18. Mg(2+) is bound by residues aspartate 18 and glycine 45. IMP is bound by residues aspartate 18–lysine 21, asparagine 43–histidine 46, threonine 135, arginine 149, asparagine 226, threonine 241, and arginine 305. Residue histidine 46 is the Proton donor of the active site. Threonine 301–arginine 307 is a substrate binding site. Residues arginine 307, lysine 333–aspartate 335, and glycine 416–glycine 418 contribute to the GTP site.

It belongs to the adenylosuccinate synthetase family. Homodimer. The cofactor is Mg(2+).

The protein resides in the plastid. It localises to the chloroplast. It carries out the reaction IMP + L-aspartate + GTP = N(6)-(1,2-dicarboxyethyl)-AMP + GDP + phosphate + 2 H(+). It participates in purine metabolism; AMP biosynthesis via de novo pathway; AMP from IMP: step 1/2. In terms of biological role, plays an important role in the de novo pathway and in the salvage pathway of purine nucleotide biosynthesis. Catalyzes the first committed step in the biosynthesis of AMP from IMP. This is Adenylosuccinate synthetase, chloroplastic from Ostreococcus lucimarinus (strain CCE9901).